The following is a 226-amino-acid chain: MLHLVDFALLKPYLTVEEIVEGARKAERLGVAAYCVNPVYAAVVRPLLSRVKLCVVVDFPFGALPTAARASLASKLAEIAEELDVVAPIGLVKSRRWADVRRDLISVVGASGGRVVKVIVEEPYLTDEERYRLYDIVAESGAHFIKSSTGFAEEAYASRLGNPVHSTPERAAAIAKYIRERGYKLGVKMAGGIRTKEQARAIIEAIGFGEDPTRVRLGTSTPEALA.

The active-site Proton donor/acceptor is the D84. Residue K146 is the Schiff-base intermediate with acetaldehyde of the active site. The active-site Proton donor/acceptor is K188.

It belongs to the DeoC/FbaB aldolase family. DeoC type 1 subfamily.

The protein resides in the cytoplasm. It carries out the reaction 2-deoxy-D-ribose 5-phosphate = D-glyceraldehyde 3-phosphate + acetaldehyde. The protein operates within carbohydrate degradation; 2-deoxy-D-ribose 1-phosphate degradation; D-glyceraldehyde 3-phosphate and acetaldehyde from 2-deoxy-alpha-D-ribose 1-phosphate: step 2/2. Catalyzes a reversible aldol reaction between acetaldehyde and D-glyceraldehyde 3-phosphate to generate 2-deoxy-D-ribose 5-phosphate. This Pyrobaculum arsenaticum (strain DSM 13514 / JCM 11321 / PZ6) protein is Deoxyribose-phosphate aldolase.